We begin with the raw amino-acid sequence, 77 residues long: Defensin-like protein (77 aa).

Positions 1-30 (MERGMRLFSSLVLVLLLVTATEMGPKVAEA) are cleaved as a signal peptide. 4 disulfide bridges follow: C33/C77, C44/C64, C50/C71, and C54/C73.

It belongs to the DEFL family.

The protein localises to the secreted. This is Defensin-like protein from Nelumbo nucifera (Sacred lotus).